Here is an 86-residue protein sequence, read N- to C-terminus: Large ribosomal subunit protein bL27 (86 aa).

The span at 1–10 (MAQKKGGGST) shows a compositional bias: gly residues. The tract at residues 1-20 (MAQKKGGGSTRNGRDSESKR) is disordered.

The protein belongs to the bacterial ribosomal protein bL27 family.

This Polynucleobacter necessarius subsp. necessarius (strain STIR1) protein is Large ribosomal subunit protein bL27.